The sequence spans 291 residues: Acetyl-coenzyme A carboxylase carboxyl transferase subunit beta (291 aa).

One can recognise a CoA carboxyltransferase N-terminal domain in the interval 34-291 (MWTKCSNCNS…LILHGVNKYE (258 aa)). Zn(2+) is bound by residues Cys-38, Cys-41, Cys-57, and Cys-60. Residues 38-60 (CSNCNSMIYYEDLENNKYVCTKC) form a C4-type zinc finger.

Belongs to the AccD/PCCB family. As to quaternary structure, acetyl-CoA carboxylase is a heterohexamer composed of biotin carboxyl carrier protein (AccB), biotin carboxylase (AccC) and two subunits each of ACCase subunit alpha (AccA) and ACCase subunit beta (AccD). Requires Zn(2+) as cofactor.

It localises to the cytoplasm. It carries out the reaction N(6)-carboxybiotinyl-L-lysyl-[protein] + acetyl-CoA = N(6)-biotinyl-L-lysyl-[protein] + malonyl-CoA. The protein operates within lipid metabolism; malonyl-CoA biosynthesis; malonyl-CoA from acetyl-CoA: step 1/1. Component of the acetyl coenzyme A carboxylase (ACC) complex. Biotin carboxylase (BC) catalyzes the carboxylation of biotin on its carrier protein (BCCP) and then the CO(2) group is transferred by the transcarboxylase to acetyl-CoA to form malonyl-CoA. The polypeptide is Acetyl-coenzyme A carboxylase carboxyl transferase subunit beta (Clostridium botulinum (strain Alaska E43 / Type E3)).